Here is a 301-residue protein sequence, read N- to C-terminus: NADH-cytochrome b5 reductase 3 (301 aa).

Glycine 2 carries N-myristoyl glycine lipidation. Positions 40–152 (DIKYPLRLID…RGPNGLLVYQ (113 aa)) constitute an FAD-binding FR-type domain. Lysine 42 carries the post-translational modification N6-acetyllysine. Tyrosine 43 carries the post-translational modification Phosphotyrosine. Lysine 50 carries the N6-acetyllysine modification. Arginine 92, proline 93, tyrosine 94, valine 109, lysine 111, and phenylalanine 114 together coordinate FAD. Residue lysine 120 is modified to N6-acetyllysine. Residues lysine 126, methionine 127, serine 128, and threonine 185 each contribute to the FAD site.

This sequence belongs to the flavoprotein pyridine nucleotide cytochrome reductase family. In terms of assembly, component of a complex composed of cytochrome b5, NADH-cytochrome b5 reductase (CYB5R3) and MTARC2. Interacts with MTLN; the interaction is required to maintain cellular lipid composition and leads to stimulation of mitochondrial respiratory complex I activity. FAD is required as a cofactor.

It localises to the endoplasmic reticulum membrane. Its subcellular location is the mitochondrion outer membrane. The enzyme catalyses 2 Fe(III)-[cytochrome b5] + NADH = 2 Fe(II)-[cytochrome b5] + NAD(+) + H(+). In terms of biological role, catalyzes the reduction of two molecules of cytochrome b5 using NADH as the electron donor. The chain is NADH-cytochrome b5 reductase 3 from Mus musculus (Mouse).